The primary structure comprises 184 residues: Probable chemoreceptor glutamine deamidase CheD (184 aa).

Belongs to the CheD family.

It carries out the reaction L-glutaminyl-[protein] + H2O = L-glutamyl-[protein] + NH4(+). Functionally, probably deamidates glutamine residues to glutamate on methyl-accepting chemotaxis receptors (MCPs), playing an important role in chemotaxis. This is Probable chemoreceptor glutamine deamidase CheD from Rhizobium etli (strain CIAT 652).